A 407-amino-acid chain; its full sequence is Probable tRNA sulfurtransferase (407 aa).

Residues 61–165 form the THUMP domain; that stretch reads NEITYRLSKI…LDAIYMYEEV (105 aa). ATP-binding positions include 183–184, 208–209, arginine 265, glycine 287, and glutamine 296; these read ML and HF.

It belongs to the ThiI family.

It is found in the cytoplasm. The enzyme catalyses [ThiI sulfur-carrier protein]-S-sulfanyl-L-cysteine + a uridine in tRNA + 2 reduced [2Fe-2S]-[ferredoxin] + ATP + H(+) = [ThiI sulfur-carrier protein]-L-cysteine + a 4-thiouridine in tRNA + 2 oxidized [2Fe-2S]-[ferredoxin] + AMP + diphosphate. The catalysed reaction is [ThiS sulfur-carrier protein]-C-terminal Gly-Gly-AMP + S-sulfanyl-L-cysteinyl-[cysteine desulfurase] + AH2 = [ThiS sulfur-carrier protein]-C-terminal-Gly-aminoethanethioate + L-cysteinyl-[cysteine desulfurase] + A + AMP + 2 H(+). It functions in the pathway cofactor biosynthesis; thiamine diphosphate biosynthesis. Functionally, catalyzes the ATP-dependent transfer of a sulfur to tRNA to produce 4-thiouridine in position 8 of tRNAs, which functions as a near-UV photosensor. Also catalyzes the transfer of sulfur to the sulfur carrier protein ThiS, forming ThiS-thiocarboxylate. This is a step in the synthesis of thiazole, in the thiamine biosynthesis pathway. The sulfur is donated as persulfide by IscS. The sequence is that of Probable tRNA sulfurtransferase from Staphylococcus aureus (strain JH1).